The primary structure comprises 236 residues: MNTTPDLPTPRALRELTPLEARILGVLVEKQHTVPDTYPLSLNALTAGCNQKTARSPVMSVSEDEVTAALDGLKHLSLVMEGSSSRVPRFEHNMNRVLGIPSQAIALLTILLLRGPQTAAELRLNSARLHGFADISSVEAFLDELAARAQPLVVRLPRAPGARENRWMHLMCGDVNLADFAGSDAGGGADSVPPSEFEALKAEQKRLVDEVARLNALVQRMATELGIDVDAPGDAG.

This sequence belongs to the UPF0502 family.

The protein is UPF0502 protein Bcep1808_3727 of Burkholderia vietnamiensis (strain G4 / LMG 22486) (Burkholderia cepacia (strain R1808)).